The following is a 228-amino-acid chain: L-ribulose-5-phosphate 4-epimerase UlaF (228 aa).

Residues 26–27, 43–44, and 72–73 each bind substrate; these read GN, SG, and SS. The Zn(2+) site is built by aspartate 74, histidine 93, and histidine 95. Aspartate 118 functions as the Proton donor/acceptor in the catalytic mechanism. Zn(2+) is bound at residue histidine 167. Catalysis depends on tyrosine 225, which acts as the Proton donor/acceptor.

This sequence belongs to the aldolase class II family. AraD/FucA subfamily. Requires Zn(2+) as cofactor.

The catalysed reaction is L-ribulose 5-phosphate = D-xylulose 5-phosphate. The protein operates within cofactor degradation; L-ascorbate degradation; D-xylulose 5-phosphate from L-ascorbate: step 4/4. In terms of biological role, catalyzes the isomerization of L-ribulose 5-phosphate to D-xylulose 5-phosphate. Is involved in the anaerobic L-ascorbate utilization. In Escherichia coli O6:K15:H31 (strain 536 / UPEC), this protein is L-ribulose-5-phosphate 4-epimerase UlaF.